A 174-amino-acid chain; its full sequence is Interleukin-10 (174 aa).

An N-terminal signal peptide occupies residues 1-16 (MPTWMLLFCLLCVTSS). Residue Asn-17 is glycosylated (N-linked (GlcNAc...) asparagine). Disulfide bonds link Cys-26–Cys-122 and Cys-76–Cys-128.

Belongs to the IL-10 family. As to quaternary structure, homodimer. Interacts with IL10RA and IL10RB.

It is found in the secreted. Functionally, major immune regulatory cytokine that acts on many cells of the immune system where it has profound anti-inflammatory functions, limiting excessive tissue disruption caused by inflammation. Mechanistically, IL10 binds to its heterotetrameric receptor comprising IL10RA and IL10RB leading to JAK1 and STAT2-mediated phosphorylation of STAT3. In turn, STAT3 translocates to the nucleus where it drives expression of anti-inflammatory mediators. Targets antigen-presenting cells (APCs) such as macrophages and monocytes and inhibits their release of pro-inflammatory cytokines including granulocyte-macrophage colony-stimulating factor /GM-CSF, granulocyte colony-stimulating factor/G-CSF, IL-1 alpha, IL-1 beta, IL-6, IL-8 and TNF-alpha. Also interferes with antigen presentation by reducing the expression of MHC-class II and co-stimulatory molecules, thereby inhibiting their ability to induce T cell activation. In addition, controls the inflammatory response of macrophages by reprogramming essential metabolic pathways including mTOR signaling. The polypeptide is Interleukin-10 (IL10) (Trichosurus vulpecula (Brush-tailed possum)).